The following is a 683-amino-acid chain: Probable metal-nicotianamine transporter YSL3 (683 aa).

The next 14 helical transmembrane spans lie at 29 to 49 (LVTPRAMAVAVVLSVVICFVG), 58 to 78 (IVPALNMPASILSFFLLKWLI), 97 to 117 (MFLLTCIITCLNLALTSGFAT), 142 to 162 (HVPIGKWIVYLFLVGMTGVLI), 204 to 224 (VATIFKVFFGSFSWSMFQWFY), 265 to 285 (IVNFGLFFGAIISWGFLYPFL), 309 to 329 (VFISVTLIITDGMINFLTLIT), 372 to 392 (IPIPVPVAAYITCAAISTIAI), 404 to 424 (LAVLYMVIPVVTFCNTYATGL), 448 to 468 (PGAVVASLLASGVIVAALHIS), 490 to 510 (TGQIFGVAVGSILCPCVFLAF), 553 to 573 (CMTFCVVAFCVTVIIDAVVLV), 595 to 615 (FFAGSYFTIDMCVGSLLLLAW), and 628 to 648 (SAVAAGLICGEGLFTLPSALL).

The protein belongs to the YSL (TC 2.A.67.2) family.

It is found in the membrane. May be involved in the transport of nicotianamine-chelated metals. The protein is Probable metal-nicotianamine transporter YSL3 (YSL3) of Oryza sativa subsp. japonica (Rice).